We begin with the raw amino-acid sequence, 201 residues long: Regulator of G-protein signaling 16 (201 aa).

S-palmitoyl cysteine attachment occurs at residues Cys2 and Cys12. One can recognise an RGS domain in the interval 64 to 180 (SFDLLLNSKN…LKSPAYRDLA (117 aa)). Phosphotyrosine; by EGFR is present on Tyr167. The residue at position 176 (Tyr176) is a Phosphotyrosine. Positions 181–201 (AQASATSTSAPSGSPAEPSHT) are disordered.

As to quaternary structure, interacts with GNAI1 and GNAQ. Interacts with GNAI3, GNAI3 and GNAO1. In terms of processing, palmitoylated on Cys-2 and/or Cys-12. Post-translationally, phosphorylated. Phosphorylation at Tyr-167 by EGFR enhances GTPase accelerating (GAP) activity toward GNAI1. In terms of tissue distribution, retinal; also predominantly expressed in the liver and pituitary.

It is found in the membrane. Its function is as follows. Regulates G protein-coupled receptor signaling cascades. Inhibits signal transduction by increasing the GTPase activity of G protein alpha subunits, thereby driving them into their inactive GDP-bound form. Plays an important role in the phototransduction cascade by regulating the lifetime and effective concentration of activated transducin alpha. May regulate extra and intracellular mitogenic signals. In Mus musculus (Mouse), this protein is Regulator of G-protein signaling 16 (Rgs16).